A 688-amino-acid chain; its full sequence is Glycine--tRNA ligase beta subunit (688 aa).

It belongs to the class-II aminoacyl-tRNA synthetase family. Tetramer of two alpha and two beta subunits.

It localises to the cytoplasm. It catalyses the reaction tRNA(Gly) + glycine + ATP = glycyl-tRNA(Gly) + AMP + diphosphate. In Histophilus somni (strain 129Pt) (Haemophilus somnus), this protein is Glycine--tRNA ligase beta subunit.